The chain runs to 634 residues: DNA-directed RNA polymerase subunit gamma (634 aa).

Positions 74, 76, 89, and 92 each coordinate Zn(2+). Asp471, Asp473, and Asp475 together coordinate Mg(2+).

The protein belongs to the RNA polymerase beta' chain family. RpoC1 subfamily. As to quaternary structure, in cyanobacteria the RNAP catalytic core is composed of 2 alpha, 1 beta, 1 beta', 1 gamma and 1 omega subunit. When a sigma factor is associated with the core the holoenzyme is formed, which can initiate transcription. It depends on Mg(2+) as a cofactor. The cofactor is Zn(2+).

The catalysed reaction is RNA(n) + a ribonucleoside 5'-triphosphate = RNA(n+1) + diphosphate. Its function is as follows. DNA-dependent RNA polymerase catalyzes the transcription of DNA into RNA using the four ribonucleoside triphosphates as substrates. This chain is DNA-directed RNA polymerase subunit gamma, found in Parasynechococcus marenigrum (strain WH8102).